Here is a 266-residue protein sequence, read N- to C-terminus: Small ribosomal subunit protein uS3m (266 aa).

The protein belongs to the universal ribosomal protein uS3 family.

The protein resides in the mitochondrion. This Mycosarcoma maydis (Corn smut fungus) protein is Small ribosomal subunit protein uS3m (MRPS3).